Consider the following 134-residue polypeptide: MESLNEYMDKIINRLKAVNEKDELVDEGMRKLQKCQEKIMKTRIDAQKHIDERHEQQSFEQQLLNKNMFETEQLEEKLKRLDDENKIGNEREFNKKLEAISAKWTDDVNLLKTTPNEPNDGNRKKLSNLSNILV.

The protein localises to the nucleus. It localises to the chromosome. Its subcellular location is the centromere. The protein resides in the kinetochore. The sequence is that of Kinetochore-binding protein 3 (kbp-3) from Caenorhabditis elegans.